A 151-amino-acid polypeptide reads, in one-letter code: Ribosome maturation factor RimP (151 aa).

This sequence belongs to the RimP family.

It localises to the cytoplasm. In terms of biological role, required for maturation of 30S ribosomal subunits. The sequence is that of Ribosome maturation factor RimP from Vibrio parahaemolyticus serotype O3:K6 (strain RIMD 2210633).